Consider the following 398-residue polypeptide: Acetate kinase (398 aa).

Residue asparagine 8 coordinates Mg(2+). An ATP-binding site is contributed by lysine 15. Arginine 89 is a binding site for substrate. The Proton donor/acceptor role is filled by aspartate 146. ATP contacts are provided by residues 206-210, 283-285, and 331-335; these read HIGNG, DMR, and GMGEN. A Mg(2+)-binding site is contributed by glutamate 383.

It belongs to the acetokinase family. In terms of assembly, homodimer. It depends on Mg(2+) as a cofactor. Mn(2+) is required as a cofactor.

It localises to the cytoplasm. The catalysed reaction is acetate + ATP = acetyl phosphate + ADP. The protein operates within metabolic intermediate biosynthesis; acetyl-CoA biosynthesis; acetyl-CoA from acetate: step 1/2. Functionally, catalyzes the formation of acetyl phosphate from acetate and ATP. Can also catalyze the reverse reaction. This chain is Acetate kinase, found in Streptococcus pyogenes serotype M5 (strain Manfredo).